Consider the following 1082-residue polypeptide: Mediator of RNA polymerase II transcription subunit 14 (1082 aa).

Disordered stretches follow at residues 1-80 and 319-343; these read MTTT…APPP and EATS…NLPL. Threonine 2 is modified (N-acetylthreonine). Residue serine 7 is modified to Phosphoserine. The span at 13 to 28 shows a compositional bias: basic and acidic residues; it reads NEERLSNEMHALKNRS. Over residues 29–59 the composition is skewed to polar residues; sequence EQNGQEQQGPVKNTQLHGPSATDPETTATQK. Low complexity predominate over residues 321-340; sequence TSTNGDSENNEENSSSNGNN. Threonine 1036 is modified (phosphothreonine).

This sequence belongs to the Mediator complex subunit 14 family. In terms of assembly, component of the Mediator complex, which is composed of at least 21 subunits that form three structurally distinct submodules. The Mediator head module contains MED6, MED8, MED11, SRB4/MED17, SRB5/MED18, ROX3/MED19, SRB2/MED20 and SRB6/MED22, the middle module contains MED1, MED4, NUT1/MED5, MED7, CSE2/MED9, NUT2/MED10, SRB7/MED21 and SOH1/MED31, and the tail module contains MED2, PGD1/MED3, RGR1/MED14, GAL11/MED15 and SIN4/MED16. The head and the middle modules interact directly with RNA polymerase II, whereas the elongated tail module interacts with gene-specific regulatory proteins.

Its subcellular location is the nucleus. Its function is as follows. Component of the Mediator complex, a coactivator involved in the regulated transcription of nearly all RNA polymerase II-dependent genes. Mediator functions as a bridge to convey information from gene-specific regulatory proteins to the basal RNA polymerase II transcription machinery. The Mediator complex, having a compact conformation in its free form, is recruited to promoters by direct interactions with regulatory proteins and serves for the assembly of a functional preinitiation complex with RNA polymerase II and the general transcription factors. The Mediator complex unfolds to an extended conformation and partially surrounds RNA polymerase II, specifically interacting with the unphosphorylated form of the C-terminal domain (CTD) of RNA polymerase II. The Mediator complex dissociates from the RNA polymerase II holoenzyme and stays at the promoter when transcriptional elongation begins. The sequence is that of Mediator of RNA polymerase II transcription subunit 14 (RGR1) from Saccharomyces cerevisiae (strain ATCC 204508 / S288c) (Baker's yeast).